The chain runs to 215 residues: Leucyl/phenylalanyl-tRNA--protein transferase (215 aa).

It belongs to the L/F-transferase family.

The protein localises to the cytoplasm. It carries out the reaction N-terminal L-lysyl-[protein] + L-leucyl-tRNA(Leu) = N-terminal L-leucyl-L-lysyl-[protein] + tRNA(Leu) + H(+). It catalyses the reaction N-terminal L-arginyl-[protein] + L-leucyl-tRNA(Leu) = N-terminal L-leucyl-L-arginyl-[protein] + tRNA(Leu) + H(+). The enzyme catalyses L-phenylalanyl-tRNA(Phe) + an N-terminal L-alpha-aminoacyl-[protein] = an N-terminal L-phenylalanyl-L-alpha-aminoacyl-[protein] + tRNA(Phe). In terms of biological role, functions in the N-end rule pathway of protein degradation where it conjugates Leu, Phe and, less efficiently, Met from aminoacyl-tRNAs to the N-termini of proteins containing an N-terminal arginine or lysine. The protein is Leucyl/phenylalanyl-tRNA--protein transferase of Campylobacter jejuni (strain RM1221).